Consider the following 1117-residue polypeptide: DNA polymerase II large subunit (1117 aa).

Over residues 279–294 the composition is skewed to basic and acidic residues; that stretch reads STKEEEKKKEESSENK. Residues 279–299 are disordered; the sequence is STKEEEKKKEESSENKPKKKA.

Belongs to the archaeal DNA polymerase II family. As to quaternary structure, heterodimer of a large subunit and a small subunit.

It carries out the reaction DNA(n) + a 2'-deoxyribonucleoside 5'-triphosphate = DNA(n+1) + diphosphate. The catalysed reaction is Exonucleolytic cleavage in the 3'- to 5'-direction to yield nucleoside 5'-phosphates.. In terms of biological role, possesses two activities: a DNA synthesis (polymerase) and an exonucleolytic activity that degrades single-stranded DNA in the 3'- to 5'-direction. Has a template-primer preference which is characteristic of a replicative DNA polymerase. In Methanosphaera stadtmanae (strain ATCC 43021 / DSM 3091 / JCM 11832 / MCB-3), this protein is DNA polymerase II large subunit.